The primary structure comprises 167 residues: NADH-quinone oxidoreductase subunit B 2 (167 aa).

4 residues coordinate [4Fe-4S] cluster: C38, C39, C103, and C132.

This sequence belongs to the complex I 20 kDa subunit family. NDH-1 is composed of 14 different subunits. Subunits NuoB, C, D, E, F, and G constitute the peripheral sector of the complex. Requires [4Fe-4S] cluster as cofactor.

The protein resides in the cell inner membrane. The catalysed reaction is a quinone + NADH + 5 H(+)(in) = a quinol + NAD(+) + 4 H(+)(out). Functionally, NDH-1 shuttles electrons from NADH, via FMN and iron-sulfur (Fe-S) centers, to quinones in the respiratory chain. The immediate electron acceptor for the enzyme in this species is believed to be ubiquinone. Couples the redox reaction to proton translocation (for every two electrons transferred, four hydrogen ions are translocated across the cytoplasmic membrane), and thus conserves the redox energy in a proton gradient. The protein is NADH-quinone oxidoreductase subunit B 2 of Rhizobium etli (strain CIAT 652).